The primary structure comprises 68 residues: MAMTNEEKVLAIREKLNIVNQGLLDPEKYKNANEEELTDIYDFVQSRERLSPSEVTAIADALGQLRHD.

It belongs to the UPF0435 family.

The chain is UPF0435 protein SA1696 from Staphylococcus aureus (strain N315).